The chain runs to 435 residues: Adenylosuccinate synthetase (435 aa).

Residues 19-25 (GDEGKGK) and 49-51 (GHT) contribute to the GTP site. Catalysis depends on aspartate 20, which acts as the Proton acceptor. Positions 20 and 49 each coordinate Mg(2+). IMP-binding positions include 20 to 23 (DEGK), 47 to 50 (NAGH), threonine 139, arginine 153, asparagine 233, threonine 248, and arginine 312. The active-site Proton donor is histidine 50. Substrate is bound at residue 308-314 (VTTGRKR). Residues arginine 314, 340-342 (KLD), and 422-424 (GVG) each bind GTP.

This sequence belongs to the adenylosuccinate synthetase family. As to quaternary structure, homodimer. Requires Mg(2+) as cofactor.

It is found in the cytoplasm. It carries out the reaction IMP + L-aspartate + GTP = N(6)-(1,2-dicarboxyethyl)-AMP + GDP + phosphate + 2 H(+). The protein operates within purine metabolism; AMP biosynthesis via de novo pathway; AMP from IMP: step 1/2. Functionally, plays an important role in the de novo pathway and in the salvage pathway of purine nucleotide biosynthesis. Catalyzes the first committed step in the biosynthesis of AMP from IMP. The sequence is that of Adenylosuccinate synthetase from Brugia malayi (Filarial nematode worm).